A 425-amino-acid chain; its full sequence is MLDLKRIRNNPEEIKKLLSNRGEDFDVAVIDEIVTLDEERRKILVEVESLKGKRNQVSAEIPKLKKAGEDVTQIMNDMRKLGEEIKNFDTRVNEINERIEYIMLRIPNIPNPEVPDGETDEDNVEIKKWGEPTKFTFEPKAHWDLGTDLNILDFERGGKVAGSRFTVYKGLGARLERSIINYFLDKHTTENGYTEILPPYMVNRDSMTGTGQLPKFEEDAFKVENNGYFLIPTAEVPVTNMYRNEVLSGDILPIKHAAYSACFRAEAGSAGRDTRGLVRQHQFNKVELVKFCKPEDSYAELDKLVEDAESVLQGLGLPYRIVRICKGDLGFTAALKYDIEVWMPSYNRYVEISSCSNFEDFQARRANIKYRETPKDKPKFIHTLNGSGVAIGRTVAAVLENYQKEDGTVEIPEAIKRFMNVDFIK.

An L-serine-binding site is contributed by 233–235 (TAE). An ATP-binding site is contributed by 264–266 (RAE). Position 287 (glutamate 287) interacts with L-serine. 351-354 (EISS) lines the ATP pocket. Residue serine 387 participates in L-serine binding.

The protein belongs to the class-II aminoacyl-tRNA synthetase family. Type-1 seryl-tRNA synthetase subfamily. Homodimer. The tRNA molecule binds across the dimer.

The protein localises to the cytoplasm. The catalysed reaction is tRNA(Ser) + L-serine + ATP = L-seryl-tRNA(Ser) + AMP + diphosphate + H(+). It catalyses the reaction tRNA(Sec) + L-serine + ATP = L-seryl-tRNA(Sec) + AMP + diphosphate + H(+). It functions in the pathway aminoacyl-tRNA biosynthesis; selenocysteinyl-tRNA(Sec) biosynthesis; L-seryl-tRNA(Sec) from L-serine and tRNA(Sec): step 1/1. Catalyzes the attachment of serine to tRNA(Ser). Is also able to aminoacylate tRNA(Sec) with serine, to form the misacylated tRNA L-seryl-tRNA(Sec), which will be further converted into selenocysteinyl-tRNA(Sec). The protein is Serine--tRNA ligase of Clostridium botulinum (strain Alaska E43 / Type E3).